The chain runs to 243 residues: Small ribosomal subunit protein uS3 (243 aa).

Residues 39 to 110 (IRKFIHKKYG…QVRINVVEVE (72 aa)) enclose the KH type-2 domain. The interval 217–243 (QQLPVGATPRRRAGRRPQQFEDRSNEG) is disordered. Positions 234 to 243 (QQFEDRSNEG) are enriched in basic and acidic residues.

Belongs to the universal ribosomal protein uS3 family. Part of the 30S ribosomal subunit. Forms a tight complex with proteins S10 and S14.

Its function is as follows. Binds the lower part of the 30S subunit head. Binds mRNA in the 70S ribosome, positioning it for translation. This chain is Small ribosomal subunit protein uS3, found in Synechococcus sp. (strain WH7803).